The following is a 220-amino-acid chain: MKLNKYIDHTLLKQDAKKKQIDSLLSEAREYGFASVCVNPTWVEHAKKGLEGTDVKVCTVVGFPLGATTSAVKAFETKEAIQNGADEIDMVINVGALKSGNLALVESDIRAVVEASGDKLVKVIIEACLLTDQEKVVVCQLAQKAGADCVKTSTGFSTGGATIADVTLMRETVGSDMGVKAAGGARSYADALAFVEAGATRIGTSAGVAILKGELADGDY.

Asp89 functions as the Proton donor/acceptor in the catalytic mechanism. The Schiff-base intermediate with acetaldehyde role is filled by Lys151. Residue Lys180 is the Proton donor/acceptor of the active site.

Belongs to the DeoC/FbaB aldolase family. DeoC type 1 subfamily.

Its subcellular location is the cytoplasm. The catalysed reaction is 2-deoxy-D-ribose 5-phosphate = D-glyceraldehyde 3-phosphate + acetaldehyde. The protein operates within carbohydrate degradation; 2-deoxy-D-ribose 1-phosphate degradation; D-glyceraldehyde 3-phosphate and acetaldehyde from 2-deoxy-alpha-D-ribose 1-phosphate: step 2/2. In terms of biological role, catalyzes a reversible aldol reaction between acetaldehyde and D-glyceraldehyde 3-phosphate to generate 2-deoxy-D-ribose 5-phosphate. The chain is Deoxyribose-phosphate aldolase from Streptococcus pneumoniae (strain 70585).